The following is a 366-amino-acid chain: Polyamine aminopropyltransferase 2 (366 aa).

Over residues K20–V58 the composition is skewed to basic and acidic residues. The interval K20–E61 is disordered. The region spanning D74–N305 is the PABS domain. Q100 serves as a coordination point for S-methyl-5'-thioadenosine. The spermidine site is built by H129 and D153. Residues D173 and D207–A208 each bind S-methyl-5'-thioadenosine. D225 (proton acceptor) is an active-site residue.

This sequence belongs to the spermidine/spermine synthase family. As to quaternary structure, homodimer or homotetramer.

It localises to the cytoplasm. The catalysed reaction is S-adenosyl 3-(methylsulfanyl)propylamine + putrescine = S-methyl-5'-thioadenosine + spermidine + H(+). It functions in the pathway amine and polyamine biosynthesis; spermidine biosynthesis; spermidine from putrescine: step 1/1. Functionally, catalyzes the irreversible transfer of a propylamine group from the amino donor S-adenosylmethioninamine (decarboxy-AdoMet) to putrescine (1,4-diaminobutane) to yield spermidine. In Bacillus cereus (strain ATCC 14579 / DSM 31 / CCUG 7414 / JCM 2152 / NBRC 15305 / NCIMB 9373 / NCTC 2599 / NRRL B-3711), this protein is Polyamine aminopropyltransferase 2.